The following is a 192-amino-acid chain: Dynein axonemal light chain 1 (192 aa).

LRR repeat units follow at residues 49 to 70, 71 to 92, 94 to 115, and 116 to 137; these read NCEK…NGLK, YLKI…EAVG, TLEE…HVMK, and KLKV…SKLG. Residues 150–192 enclose the LRRCT domain; it reads NPLEEKHTAEGNWMEEAVKRLPKLKKLDGNPVIKQEEEEGDES.

It belongs to the dynein light chain LC1-type family. In terms of assembly, interacts with DNAH5, a outer arm dynein heavy chain. Interacts with tubulin located within the A-tubule of the outer doublets in a ATP-independent manner.

The protein resides in the cytoplasm. It localises to the cytoskeleton. The protein localises to the cilium axoneme. In terms of biological role, part of the multisubunit axonemal ATPase complexes that generate the force for cilia motility and govern beat frequency. Component of the outer arm dynein (ODA). May be involved in a mechanosensory feedback mechanism controlling ODA activity based on external conformational cues by tethering the outer arm dynein heavy chain (DNAH5) to the microtubule within the axoneme. In Xenopus laevis (African clawed frog), this protein is Dynein axonemal light chain 1 (dnal1).